The chain runs to 119 residues: Holo-[acyl-carrier-protein] synthase (119 aa).

Residues Asp-5 and Glu-51 each coordinate Mg(2+).

The protein belongs to the P-Pant transferase superfamily. AcpS family. Requires Mg(2+) as cofactor.

It is found in the cytoplasm. The catalysed reaction is apo-[ACP] + CoA = holo-[ACP] + adenosine 3',5'-bisphosphate + H(+). In terms of biological role, transfers the 4'-phosphopantetheine moiety from coenzyme A to a Ser of acyl-carrier-protein. This is Holo-[acyl-carrier-protein] synthase from Helicobacter pylori (strain ATCC 700392 / 26695) (Campylobacter pylori).